A 373-amino-acid polypeptide reads, in one-letter code: Thyroid hormone receptor beta (373 aa).

Residues 1–18 (MPSSMSGYIPSYLDKDEL) are modulating. Residues Cys-19, Cys-22, Cys-36, Cys-39, Cys-57, Cys-63, Cys-73, and Cys-76 each contribute to the Zn(2+) site. NR C4-type zinc fingers lie at residues 19–39 (CVVC…CEGC) and 57–81 (CKYE…FKKC). The nuclear receptor DNA-binding region spans 19-93 (CVVCGDKATG…VGMATDLVLD (75 aa)). The NR LBD domain occupies 129–373 (EEWELIQVVT…PPLFLEVFED (245 aa)). 3,3',5-triiodo-L-thyronine is bound by residues Arg-194, Asn-243, and His-347. The L-thyroxine site is built by Arg-194, Asn-243, and His-347.

It belongs to the nuclear hormone receptor family. NR1 subfamily.

The protein localises to the nucleus. In terms of biological role, nuclear hormone receptor that can act as a repressor or activator of transcription. High affinity receptor for thyroid hormones, including triiodothyronine and thyroxine. In Aquarana catesbeiana (American bullfrog), this protein is Thyroid hormone receptor beta (thrb).